The primary structure comprises 517 residues: Perilipin-1 (517 aa).

Serine 81 is subject to Phosphoserine. Residue threonine 85 is modified to Phosphothreonine. Residues serine 126, serine 130, serine 132, serine 137, and serine 174 each carry the phosphoserine modification. Residues 197–217 (VESAPSSGRQKTQKAPKAKPS) form a disordered region. Threonine 224, threonine 299, and threonine 301 each carry phosphothreonine. Residues 285–321 (HNLAASKDENHEDQTDTEGEETDEEEEEEESEAEENV) form a disordered region. Residues 291 to 322 (KDENHEDQTDTEGEETDEEEEEEESEAEENVL) form a required for interaction with CIDEC region. The segment covering 299–319 (TDTEGEETDEEEEEEESEAEE) has biased composition (acidic residues). Phosphoserine occurs at positions 315, 385, 387, 408, 411, 434, 436, 440, 460, 492, and 494. A disordered region spans residues 415–495 (PESEFQDIDN…KPARRVSDSF (81 aa)). Residues 483–492 (PREKPARRVS) are compositionally biased toward basic and acidic residues.

Belongs to the perilipin family. In terms of assembly, interacts with ABHD5. Interacts with CIDEC. Interacts with AQP7. In terms of processing, major cAMP-dependent protein kinase substrate in adipocytes, also dephosphorylated by PP1. When phosphorylated, may be maximally sensitive to HSL. When unphosphorylated, may play a role in the inhibition of lipolysis, by acting as a barrier in lipid droplet. Post-translationally, the N-terminus is blocked. As to expression, adipocytes.

Its subcellular location is the endoplasmic reticulum. It localises to the lipid droplet. Its function is as follows. Modulator of adipocyte lipid metabolism. Coats lipid storage droplets to protect them from breakdown by hormone-sensitive lipase (HSL). Its absence may result in leanness. Plays a role in unilocular lipid droplet formation by activating CIDEC. Their interaction promotes lipid droplet enlargement and directional net neutral lipid transfer. May modulate lipolysis and triglyceride levels. This chain is Perilipin-1 (Plin1), found in Rattus norvegicus (Rat).